The chain runs to 284 residues: Steroidogenic acute regulatory protein, mitochondrial (284 aa).

A mitochondrion-targeting transit peptide spans 1-62; the sequence is MFLATFKLCA…RRSSLLGSQL (62 aa). A phosphoserine; by PKA mark is found at serine 56 and serine 194. The 214-residue stretch at 66–279 folds into the START domain; it reads LYSDQELSYI…LRKRLEASPA (214 aa).

In terms of assembly, may interact with TSPO. In terms of tissue distribution, expressed within glia and neurons in discrete regions of the brain.

Its subcellular location is the mitochondrion. It carries out the reaction cholesterol(in) = cholesterol(out). Its pathway is steroid metabolism; cholesterol metabolism. Functionally, plays a key role in steroid hormone synthesis by enhancing the metabolism of cholesterol into pregnenolone. Transporter that binds to and transport cholesterol through the intermembrane space of the mitochondrion. The protein is Steroidogenic acute regulatory protein, mitochondrial (Star) of Mus musculus (Mouse).